Consider the following 496-residue polypeptide: O-acetyltransferase cpsE (496 aa).

Over residues 203 to 217 (IGTQGQLPDGVQSSD) the composition is skewed to polar residues. The tract at residues 203–228 (IGTQGQLPDGVQSSDDPTDGAGDIFE) is disordered.

The protein belongs to the fumigaclavine B O-acetyltransferase family.

The enzyme catalyses campesine A + acetyl-CoA = campesine C + CoA. The protein operates within alkaloid biosynthesis. In terms of biological role, O-acetyltransferase; part of the gene cluster that mediates the biosynthesis of campesine G, a dimeric indole piperazine alkaloid that shows good insecticidal activity Galleria mellonella. Within the pathway, cpsE acetylates N13 of campesine A to produce campesine C. CpsE produces an inseparable mixture of two acyl-atropisomers due to the spontaneous rotation of an acyl group at N13 of piperazine ring. The non-canonical non-ribosomal peptide synthetase cpsA catalyzes the first steps of the pathway by producing L-tryptophanal and L-valinal from their respective amino-acids. These products condensate spontaneously to form trypyl-valyl pyrazine also known as didehydrocampesine A. The NmrA-like family domain-containing oxidoreductase cpsB is the next enzyme in cps pathway and reduces the unstable didehydrocampesine A to campesine A. The methyltransferase cpsF and the acetyltransferase cpsE both recognize N13 of piperazine ring to carry out methylation and acetylation of campesine A to produce campesine C and B, respectively. The cytochrome P450 monooxygenase cpsD then acts as a dimerase that catalyzes oxidative heterocoupling between campesine B and C to produce heterodimers with unexpected 6/5/6/6/6/6/5/6 eight-ring scaffold called campesine D. Finally,the cytochrome P450 monooxygenase cpsC is a regioselective dehydrogenase that catalyzes dehydrogenation reaction towards C2-N1 to produce campesine G. This Aspergillus campestris (strain IBT 28561) protein is O-acetyltransferase cpsE.